The sequence spans 272 residues: MRILLTNDDGIHAPGIHALWRIFDDWADIFVVAPDTERSATGHGITVHQPLRVEKLSFANPHCHGWAVNGTPADCVKLAMEELLAEPPHIVISGINRGPNLGTDVLYSGTVSAAMEGVIYGVPSIAVSVTGWHTADYTVAAETTRLLCEKLVARGLTPDTFLNVNVPDLPRERIAGIQVTKLGSRRYQNIFDKRTDPRGRTYYWMAGEVHDVDAGEGTDISAVNAGAISVTPIHFDLTNYSLIQEVSDWLGGGSSPFADRNKKDDVETKRKA.

A divalent metal cation contacts are provided by Asp8, Asp9, Ser39, and Asn96.

The protein belongs to the SurE nucleotidase family. A divalent metal cation is required as a cofactor.

The protein resides in the cytoplasm. It catalyses the reaction a ribonucleoside 5'-phosphate + H2O = a ribonucleoside + phosphate. In terms of biological role, nucleotidase that shows phosphatase activity on nucleoside 5'-monophosphates. This Heliobacterium modesticaldum (strain ATCC 51547 / Ice1) protein is 5'-nucleotidase SurE.